The sequence spans 258 residues: Type III pantothenate kinase (258 aa).

Residue 7 to 14 (DVGNTRLK) coordinates ATP. Substrate is bound by residues tyrosine 96 and 103-106 (GADR). The Proton acceptor role is filled by aspartate 105. An ATP-binding site is contributed by threonine 133. Threonine 183 provides a ligand contact to substrate.

Belongs to the type III pantothenate kinase family. As to quaternary structure, homodimer. NH4(+) serves as cofactor. The cofactor is K(+).

The protein resides in the cytoplasm. The enzyme catalyses (R)-pantothenate + ATP = (R)-4'-phosphopantothenate + ADP + H(+). The protein operates within cofactor biosynthesis; coenzyme A biosynthesis; CoA from (R)-pantothenate: step 1/5. In terms of biological role, catalyzes the phosphorylation of pantothenate (Pan), the first step in CoA biosynthesis. The sequence is that of Type III pantothenate kinase from Acidovorax ebreus (strain TPSY) (Diaphorobacter sp. (strain TPSY)).